Reading from the N-terminus, the 517-residue chain is Ribonuclease Y (517 aa).

The helical transmembrane segment at 1–21 (MIEVLIGLGAGVAGVGAGYLY) threads the bilayer. Residues 207-273 (LINVVNIKND…TRVIELLVED (67 aa)) enclose the KH domain. The region spanning 333-426 (ALAHSLEVAH…VCAADCLSAA (94 aa)) is the HD domain.

It belongs to the RNase Y family.

It is found in the cell membrane. In terms of biological role, endoribonuclease that initiates mRNA decay. This is Ribonuclease Y from Campylobacter curvus (strain 525.92).